The chain runs to 433 residues: Apolipoprotein L5 (433 aa).

The tract at residues 346–433 (HHRHLPQKAS…GRQAPGRHRQ (88 aa)) is disordered. Residues 359-371 (SSSRGRAVRGSRV) show a composition bias toward low complexity. A compositionally biased stretch (basic residues) spans 422-433 (RKGRQAPGRHRQ).

Belongs to the apolipoprotein L family. Low level of expression; detected in uterus, testis, skeletal muscle and stomach.

The protein localises to the cytoplasm. May affect the movement of lipids in the cytoplasm or allow the binding of lipids to organelles. This chain is Apolipoprotein L5 (APOL5), found in Homo sapiens (Human).